The following is a 351-amino-acid chain: Glycerol-1-phosphate dehydrogenase [NAD(P)+] (351 aa).

NAD(+) contacts are provided by residues G97–D101 and T119–S122. D124 is a binding site for substrate. S128 contacts NAD(+). A substrate-binding site is contributed by D171. Residues D171 and H251 each coordinate Zn(2+). Position 255 (H255) interacts with substrate. H267 is a binding site for Zn(2+).

This sequence belongs to the glycerol-1-phosphate dehydrogenase family. In terms of assembly, homodimer. Zn(2+) is required as a cofactor.

The protein localises to the cytoplasm. The enzyme catalyses sn-glycerol 1-phosphate + NAD(+) = dihydroxyacetone phosphate + NADH + H(+). It catalyses the reaction sn-glycerol 1-phosphate + NADP(+) = dihydroxyacetone phosphate + NADPH + H(+). It participates in membrane lipid metabolism; glycerophospholipid metabolism. Catalyzes the NAD(P)H-dependent reduction of dihydroxyacetonephosphate (DHAP or glycerone phosphate) to glycerol 1-phosphate (G1P). The G1P thus generated is used as the glycerophosphate backbone of phospholipids in the cellular membranes of Archaea. This chain is Glycerol-1-phosphate dehydrogenase [NAD(P)+], found in Saccharolobus islandicus (strain L.S.2.15 / Lassen #1) (Sulfolobus islandicus).